A 676-amino-acid polypeptide reads, in one-letter code: DNA-directed RNA polymerase subunit beta' (676 aa).

Residues cysteine 69, cysteine 71, cysteine 87, and cysteine 90 each contribute to the Zn(2+) site. Residues aspartate 489, aspartate 491, and aspartate 493 each contribute to the Mg(2+) site.

This sequence belongs to the RNA polymerase beta' chain family. RpoC1 subfamily. As to quaternary structure, in plastids the minimal PEP RNA polymerase catalytic core is composed of four subunits: alpha, beta, beta', and beta''. When a (nuclear-encoded) sigma factor is associated with the core the holoenzyme is formed, which can initiate transcription. It depends on Mg(2+) as a cofactor. Zn(2+) is required as a cofactor.

It is found in the plastid. The protein resides in the chloroplast. It catalyses the reaction RNA(n) + a ribonucleoside 5'-triphosphate = RNA(n+1) + diphosphate. DNA-dependent RNA polymerase catalyzes the transcription of DNA into RNA using the four ribonucleoside triphosphates as substrates. The protein is DNA-directed RNA polymerase subunit beta' of Lolium perenne (Perennial ryegrass).